Reading from the N-terminus, the 320-residue chain is Endochitinase (320 aa).

Residues 1–23 (MKRTLKVSFFILCLLPLFLGSKA) form the signal peptide. The Chitin-binding type-1 domain maps to 24 to 64 (EQCGSQAGGAVCPNGLCCSKFGFCGSTDPYCGDGCQSQCKS). Cystine bridges form between Cys26/Cys41, Cys35/Cys47, Cys40/Cys54, Cys58/Cys62, Cys101/Cys163, Cys175/Cys182, and Cys281/Cys313. Glu145 acts as the Proton donor in catalysis.

Belongs to the glycosyl hydrolase 19 family. Chitinase class I subfamily.

It carries out the reaction Random endo-hydrolysis of N-acetyl-beta-D-glucosaminide (1-&gt;4)-beta-linkages in chitin and chitodextrins.. Its function is as follows. Defense against chitin-containing fungal pathogens. The chain is Endochitinase from Pisum sativum (Garden pea).